Consider the following 315-residue polypeptide: Salivary protein SG34 (315 aa).

Positions 1–20 are cleaved as a signal peptide; sequence MPVSYDFVILLALFIVLARS. Residues 98-161 adopt a coiled-coil conformation; sequence NAEVELLRES…QEEIEQQTKQ (64 aa).

(Microbial infection) Modulates replication of duck Tembusu virus in salivary glands and virus release into the saliva, probably via the regulation of antimicrobial peptides expression in response to duck Tembusu virus infection. This is Salivary protein SG34 from Aedes albopictus (Asian tiger mosquito).